The chain runs to 472 residues: MQVASATPAATVRKAAAGDELSEFFALTPDLLEVANASGNASLQLQDLWWELGLELPDGAAPGHPPGGGGAESTDTEARVRILISAVYWVVCALGLAGNLLVLYLMKSKQGWRKSSINLFVTNLALTDFQFVLTLPFWAVENALDFKWPFGKAMCKIVSMVTSMNMYASVFFLTAMSVARYHSVASALKSHRTRGRGRGDCCGQSLRESCCFSAKVLCGLIWASAALASLPNAIFSTTIRVLGEELCLMHFPDKLLGWDRQFWLGLYHLQKVLLGFLLPLSIISLCYLLLVRFISDRRVVGTTDAVGAAAAPGGGLSTASARRRSKVTKSVTIVVLSFFLCWLPNQALTTWSILIKFNAVPFSQEYFQCQVYAFPVSVCLAHSNSCLNPILYCLVRREFRKALKNLLWRIASPSLTNMRPFTATTKPEPEDHGLQALAPLNAAAEPDLIYYPPGVVVYSGGRYDLLPSSSAY.

Residues 1–81 (MQVASATPAA…ESTDTEARVR (81 aa)) lie on the Extracellular side of the membrane. Asn-36 and Asn-40 each carry an N-linked (GlcNAc...) asparagine glycan. A helical membrane pass occupies residues 82 to 102 (ILISAVYWVVCALGLAGNLLV). The Cytoplasmic portion of the chain corresponds to 103–119 (LYLMKSKQGWRKSSINL). The chain crosses the membrane as a helical span at residues 120–140 (FVTNLALTDFQFVLTLPFWAV). At 141–156 (ENALDFKWPFGKAMCK) the chain is on the extracellular side. The cysteines at positions 155 and 247 are disulfide-linked. The helical transmembrane segment at 157 to 177 (IVSMVTSMNMYASVFFLTAMS) threads the bilayer. The Cytoplasmic portion of the chain corresponds to 178–215 (VARYHSVASALKSHRTRGRGRGDCCGQSLRESCCFSAK). Residues 216-236 (VLCGLIWASAALASLPNAIFS) traverse the membrane as a helical segment. Over 237-270 (TTIRVLGEELCLMHFPDKLLGWDRQFWLGLYHLQ) the chain is Extracellular. The chain crosses the membrane as a helical span at residues 271-291 (KVLLGFLLPLSIISLCYLLLV). The Cytoplasmic segment spans residues 292–298 (RFISDRR). A helical transmembrane segment spans residues 299–319 (VVGTTDAVGAAAAPGGGLSTA). Topologically, residues 320–332 (SARRRSKVTKSVT) are extracellular. Residues 333-353 (IVVLSFFLCWLPNQALTTWSI) form a helical membrane-spanning segment. At 354–472 (LIKFNAVPFS…YDLLPSSSAY (119 aa)) the chain is on the cytoplasmic side.

This sequence belongs to the G-protein coupled receptor 1 family.

It is found in the cell membrane. Receptor for RNL3/relaxin-3. Binding of the ligand inhibit cAMP accumulation. The protein is Relaxin-3 receptor 1 (Rxfp3) of Mus musculus (Mouse).